A 344-amino-acid polypeptide reads, in one-letter code: Fructose-bisphosphate aldolase (344 aa).

Ser53 contacts D-glyceraldehyde 3-phosphate. The active-site Proton donor is the Asp95. Residues His96, Asp131, Glu161, and His212 each coordinate Zn(2+). Position 213 (Gly213) interacts with dihydroxyacetone phosphate. His252 is a Zn(2+) binding site. Dihydroxyacetone phosphate contacts are provided by residues 253–255 (GGS) and 274–277 (NVDT).

Belongs to the class II fructose-bisphosphate aldolase family. Zn(2+) serves as cofactor.

The enzyme catalyses beta-D-fructose 1,6-bisphosphate = D-glyceraldehyde 3-phosphate + dihydroxyacetone phosphate. The protein operates within carbohydrate degradation; glycolysis; D-glyceraldehyde 3-phosphate and glycerone phosphate from D-glucose: step 4/4. Its function is as follows. Catalyzes the aldol condensation of dihydroxyacetone phosphate (DHAP or glycerone-phosphate) with glyceraldehyde 3-phosphate (G3P) to form fructose 1,6-bisphosphate (FBP) in gluconeogenesis and the reverse reaction in glycolysis. This is Fructose-bisphosphate aldolase (fba) from Mycobacterium bovis (strain ATCC BAA-935 / AF2122/97).